We begin with the raw amino-acid sequence, 658 residues long: Threonine--tRNA ligase (658 aa).

One can recognise a TGS domain in the interval 1–64 (MSNTVSLQFP…GASGKVEIIT (64 aa)). Residues 246 to 548 (DHRRLGREMD…LIENFAGHMP (303 aa)) are catalytic. Positions 343, 394, and 525 each coordinate Zn(2+).

It belongs to the class-II aminoacyl-tRNA synthetase family. Homodimer. Requires Zn(2+) as cofactor.

Its subcellular location is the cytoplasm. It catalyses the reaction tRNA(Thr) + L-threonine + ATP = L-threonyl-tRNA(Thr) + AMP + diphosphate + H(+). Its function is as follows. Catalyzes the attachment of threonine to tRNA(Thr) in a two-step reaction: L-threonine is first activated by ATP to form Thr-AMP and then transferred to the acceptor end of tRNA(Thr). Also edits incorrectly charged L-seryl-tRNA(Thr). This is Threonine--tRNA ligase from Brucella melitensis biotype 2 (strain ATCC 23457).